The following is a 156-amino-acid chain: Small ribosomal subunit protein uS7 (156 aa).

It belongs to the universal ribosomal protein uS7 family. As to quaternary structure, part of the 30S ribosomal subunit. Contacts proteins S9 and S11.

Its function is as follows. One of the primary rRNA binding proteins, it binds directly to 16S rRNA where it nucleates assembly of the head domain of the 30S subunit. Is located at the subunit interface close to the decoding center, probably blocks exit of the E-site tRNA. The polypeptide is Small ribosomal subunit protein uS7 (Laribacter hongkongensis (strain HLHK9)).